The chain runs to 476 residues: Membrane-bound lytic murein transglycosylase F (476 aa).

Residues 1-22 form the signal peptide; the sequence is MTRFLFALILGFLLTACQQVTV. The non-LT domain stretch occupies residues 23–257; it reads DETEFVPKKL…HLNEKYFGHV (235 aa). Positions 258-476 are LT domain; sequence KRFDYVDTRA…AGTLSPEQPK (219 aa). Glu302 is an active-site residue. Positions 446-476 are disordered; the sequence is SKQQNPEEEPSDLASEEPAIPAGTLSPEQPK. A compositionally biased stretch (acidic residues) spans 451-460; it reads PEEEPSDLAS.

In the N-terminal section; belongs to the bacterial solute-binding protein 3 family. It in the C-terminal section; belongs to the transglycosylase Slt family.

It is found in the cell outer membrane. It carries out the reaction Exolytic cleavage of the (1-&gt;4)-beta-glycosidic linkage between N-acetylmuramic acid (MurNAc) and N-acetylglucosamine (GlcNAc) residues in peptidoglycan, from either the reducing or the non-reducing ends of the peptidoglycan chains, with concomitant formation of a 1,6-anhydrobond in the MurNAc residue.. Functionally, murein-degrading enzyme that degrades murein glycan strands and insoluble, high-molecular weight murein sacculi, with the concomitant formation of a 1,6-anhydromuramoyl product. Lytic transglycosylases (LTs) play an integral role in the metabolism of the peptidoglycan (PG) sacculus. Their lytic action creates space within the PG sacculus to allow for its expansion as well as for the insertion of various structures such as secretion systems and flagella. In Shewanella baltica (strain OS155 / ATCC BAA-1091), this protein is Membrane-bound lytic murein transglycosylase F.